The sequence spans 288 residues: Homoserine kinase (288 aa).

Position 78-88 (78-88 (PLARGLGSSSS)) interacts with ATP.

It belongs to the GHMP kinase family. Homoserine kinase subfamily.

It is found in the cytoplasm. The enzyme catalyses L-homoserine + ATP = O-phospho-L-homoserine + ADP + H(+). The protein operates within amino-acid biosynthesis; L-threonine biosynthesis; L-threonine from L-aspartate: step 4/5. In terms of biological role, catalyzes the ATP-dependent phosphorylation of L-homoserine to L-homoserine phosphate. This is Homoserine kinase from Streptococcus agalactiae serotype V (strain ATCC BAA-611 / 2603 V/R).